The primary structure comprises 236 residues: Biosynthetic peptidoglycan transglycosylase (236 aa).

The helical transmembrane segment at 12–31 threads the bilayer; sequence ALLWFAAGSVLVVLVLRWVP.

This sequence belongs to the glycosyltransferase 51 family.

The protein resides in the cell inner membrane. It catalyses the reaction [GlcNAc-(1-&gt;4)-Mur2Ac(oyl-L-Ala-gamma-D-Glu-L-Lys-D-Ala-D-Ala)](n)-di-trans,octa-cis-undecaprenyl diphosphate + beta-D-GlcNAc-(1-&gt;4)-Mur2Ac(oyl-L-Ala-gamma-D-Glu-L-Lys-D-Ala-D-Ala)-di-trans,octa-cis-undecaprenyl diphosphate = [GlcNAc-(1-&gt;4)-Mur2Ac(oyl-L-Ala-gamma-D-Glu-L-Lys-D-Ala-D-Ala)](n+1)-di-trans,octa-cis-undecaprenyl diphosphate + di-trans,octa-cis-undecaprenyl diphosphate + H(+). It functions in the pathway cell wall biogenesis; peptidoglycan biosynthesis. Peptidoglycan polymerase that catalyzes glycan chain elongation from lipid-linked precursors. The sequence is that of Biosynthetic peptidoglycan transglycosylase from Pseudomonas syringae pv. syringae (strain B728a).